Here is a 179-residue protein sequence, read N- to C-terminus: 6,7-dimethyl-8-ribityllumazine synthase (179 aa).

Residues tryptophan 13, 45 to 47, and 68 to 70 contribute to the 5-amino-6-(D-ribitylamino)uracil site; these read AVE and VVI. 73–74 lines the (2S)-2-hydroxy-3-oxobutyl phosphate pocket; it reads DT. Histidine 76 acts as the Proton donor in catalysis. Phenylalanine 101 contributes to the 5-amino-6-(D-ribitylamino)uracil binding site. Residue arginine 115 coordinates (2S)-2-hydroxy-3-oxobutyl phosphate. Residues 157–179 form a disordered region; the sequence is AKAAKKPAKAAAKTQKKKKKVRK.

This sequence belongs to the DMRL synthase family.

It catalyses the reaction (2S)-2-hydroxy-3-oxobutyl phosphate + 5-amino-6-(D-ribitylamino)uracil = 6,7-dimethyl-8-(1-D-ribityl)lumazine + phosphate + 2 H2O + H(+). It participates in cofactor biosynthesis; riboflavin biosynthesis; riboflavin from 2-hydroxy-3-oxobutyl phosphate and 5-amino-6-(D-ribitylamino)uracil: step 1/2. In terms of biological role, catalyzes the formation of 6,7-dimethyl-8-ribityllumazine by condensation of 5-amino-6-(D-ribitylamino)uracil with 3,4-dihydroxy-2-butanone 4-phosphate. This is the penultimate step in the biosynthesis of riboflavin. The chain is 6,7-dimethyl-8-ribityllumazine synthase from Bdellovibrio bacteriovorus (strain ATCC 15356 / DSM 50701 / NCIMB 9529 / HD100).